The chain runs to 442 residues: Glutamyl-tRNA(Gln) amidotransferase subunit A (442 aa).

Active-site charge relay system residues include K50 and S125. The Acyl-ester intermediate role is filled by S149.

It belongs to the amidase family. GatA subfamily. In terms of assembly, heterotrimer of A, B and C subunits.

The enzyme catalyses L-glutamyl-tRNA(Gln) + L-glutamine + ATP + H2O = L-glutaminyl-tRNA(Gln) + L-glutamate + ADP + phosphate + H(+). Its function is as follows. Allows the formation of correctly charged Gln-tRNA(Gln) through the transamidation of misacylated Glu-tRNA(Gln) in organisms which lack glutaminyl-tRNA synthetase. The reaction takes place in the presence of glutamine and ATP through an activated gamma-phospho-Glu-tRNA(Gln). This chain is Glutamyl-tRNA(Gln) amidotransferase subunit A, found in Nitratiruptor sp. (strain SB155-2).